Here is a 174-residue protein sequence, read N- to C-terminus: ATP-dependent protease subunit HslV (174 aa).

The active site involves Thr-2. The Na(+) site is built by Gly-157, Cys-160, and Thr-163.

This sequence belongs to the peptidase T1B family. HslV subfamily. A double ring-shaped homohexamer of HslV is capped on each side by a ring-shaped HslU homohexamer. The assembly of the HslU/HslV complex is dependent on binding of ATP.

The protein localises to the cytoplasm. The enzyme catalyses ATP-dependent cleavage of peptide bonds with broad specificity.. With respect to regulation, allosterically activated by HslU binding. Functionally, protease subunit of a proteasome-like degradation complex believed to be a general protein degrading machinery. In Shewanella halifaxensis (strain HAW-EB4), this protein is ATP-dependent protease subunit HslV.